The following is a 329-amino-acid chain: Beta-tectorin (329 aa).

A signal peptide spans 1–17; that stretch reads MVVRAFVLLALFAEASA. A ZP domain is found at 19–283; it reads SCTPNKADVI…LSCPVNCDKR (265 aa). 4 N-linked (GlcNAc...) asparagine glycosylation sites follow: Asn-80, Asn-104, Asn-116, and Asn-145. Cys-204 and Cys-264 are oxidised to a cystine. Ala-305 is lipidated: GPI-anchor amidated alanine. Positions 306–329 are cleaved as a propeptide — removed in mature form; the sequence is FSGLCDFSDVLLHLILMLGTWAVL.

May form homomeric filament after self-association or heteromeric filament after association with alpha-tectorin. Interacts with CEACAM16. Post-translationally, the presence of a hydrophobic C-terminus preceded by a potential cleavage site strongly suggests that tectorins are synthesized as glycosylphosphatidylinositol-linked, membrane-bound precursors. Tectorins are targeted to the apical surface of the inner ear epithelia by the lipid and proteolytically released into the extracellular compartment.

The protein localises to the cell membrane. It localises to the secreted. It is found in the extracellular space. The protein resides in the extracellular matrix. Functionally, one of the major non-collagenous components of the tectorial membrane. The tectorial membrane is an extracellular matrix of the inner ear that covers the neuroepithelium of the cochlea and contacts the stereocilia bundles of specialized sensory hair cells. Sound induces movement of these hair cells relative to the tectorial membrane, deflects the stereocilia and leads to fluctuations in hair-cell membrane potential, transducing sound into electrical signals. The chain is Beta-tectorin (Tectb) from Mus musculus (Mouse).